The sequence spans 277 residues: Zaragozic acid A biosynthesis cluster protein 1 (277 aa).

It participates in secondary metabolite biosynthesis. Its function is as follows. Part of the gene cluster that mediates the biosynthesis of squalestatin S1 (SQS1, also known as zaragozic acid A), a heavily oxidized fungal polyketide that offers potent cholesterol lowering activity by targeting squalene synthase (SS). SQS1 is composed of a 2,8-dioxobicyclic[3.2.1]octane-3,4,5-tricarboxyclic acid core that is connected to two lipophilic polyketide arms. These initial steps feature the priming of an unusual benzoic acid starter unit onto the highly reducing polyketide synthase clz14, followed by oxaloacetate extension and product release to generate a tricarboxylic acid containing product. The phenylalanine ammonia lyase (PAL) clz10 and the acyl-CoA ligase clz12 are involved in transforming phenylalanine into benzoyl-CoA. The citrate synthase-like protein clz17 is involved in connecting the C-alpha-carbons of the hexaketide chain and oxaloacetate to afford the tricarboxylic acid unit. The potential hydrolytic enzymes, clz11 and clz13, are in close proximity to pks2 and may participate in product release. On the other side, the tetraketide arm is synthesized by a the squalestatin tetraketide synthase clz2 and enzymatically esterified to the core in the last biosynthetic step, by the acetyltransferase clz6. The biosynthesis of the tetraketide must involve 3 rounds of chain extension. After the first and second rounds methyl-transfer occurs, and in all rounds of extension the ketoreductase and dehydratase are active. The enoyl reductase and C-MeT of clz2 are not active in the final round of extension. The acetyltransferase clz6 appears to have a broad substrate selectivity for its acyl CoA substrate, allowing the in vitro synthesis of novel squalestatins. The biosynthesis of SQS1 requires several oxidative steps likely performed by oxidoreductases clz3, clz15 and clz16. Finally, in support of the identification of the cluster as being responsible for SQS1 production, the cluster contains a gene encoding a putative squalene synthase (SS) clz20, suggesting a likely mechanism for self-resistance. The sequence is that of Zaragozic acid A biosynthesis cluster protein 1 from Cochliobolus lunatus (Filamentous fungus).